Here is a 357-residue protein sequence, read N- to C-terminus: (4E)-oxalomesaconate Delta-isomerase (357 aa).

It belongs to the PrpF family.

It catalyses the reaction (1E)-4-oxobut-1-ene-1,2,4-tricarboxylate = (3Z)-2-oxo-4-carboxy-3-hexenedioate. Its pathway is secondary metabolite metabolism; lignin degradation. Its function is as follows. Contributes to the degradation of lignin at the level of the protocatechuate 4,5-cleavage pathway. Catalyzes the isomerization of the double bond between C4 and C5 in (4E)-oxalomesaconate (OMA) to (3Z)-2-keto-4-carboxy-3-hexenedioate (KCH), where the double bond has migrated between C3 and C4 via a 1,3-allylic isomerization. This is (4E)-oxalomesaconate Delta-isomerase from Novosphingobium sp. (strain KA1) (Sphingomonas sp. (strain KA1)).